The chain runs to 333 residues: Isopenicillin N synthase (333 aa).

Isopenicillin N is bound by residues arginine 87, tyrosine 91, and tyrosine 191. N-[(5S)-5-amino-5-carboxypentanoyl]-L-cysteinyl-D-valine contacts are provided by arginine 87, tyrosine 91, tyrosine 191, histidine 216, and aspartate 218. The Fe2OG dioxygenase domain maps to 180–290 (DTLSCRSLMI…RLSLPFFLHA (111 aa)). Fe(2+) is bound by residues histidine 216, aspartate 218, and histidine 272. Arginine 281 contributes to the 2-oxoglutarate binding site. Residue serine 283 coordinates isopenicillin N. Residue serine 283 participates in N-[(5S)-5-amino-5-carboxypentanoyl]-L-cysteinyl-D-valine binding.

The protein belongs to the iron/ascorbate-dependent oxidoreductase family. The cofactor is Fe cation. It depends on L-ascorbate as a cofactor.

It carries out the reaction N-[(5S)-5-amino-5-carboxypentanoyl]-L-cysteinyl-D-valine + O2 = isopenicillin N + 2 H2O. Its pathway is antibiotic biosynthesis; penicillin G biosynthesis; penicillin G from L-alpha-aminoadipate and L-cysteine and L-valine: step 2/3. Functionally, removes, in the presence of oxygen, 4 hydrogen atoms from delta-L-(alpha-aminoadipyl)-L-cysteinyl-D-valine (ACV) to form the azetidinone and thiazolidine rings of isopenicillin. This chain is Isopenicillin N synthase (pcbC), found in Streptomyces microflavus (Streptomyces lipmanii).